The chain runs to 224 residues: uncharacterized protein (224 aa).

The chain crosses the membrane as a helical span at residues 21-41 (LTVILIIPIVYLGVCGCFEIV).

It is found in the membrane. This is an uncharacterized protein from Methanocaldococcus jannaschii (strain ATCC 43067 / DSM 2661 / JAL-1 / JCM 10045 / NBRC 100440) (Methanococcus jannaschii).